The chain runs to 276 residues: NH(3)-dependent NAD(+) synthetase (276 aa).

43–50 (GISGGVDS) contacts ATP. Asp49 lines the Mg(2+) pocket. Arg146 contacts deamido-NAD(+). Thr166 contacts ATP. Position 171 (Glu171) interacts with Mg(2+). Deamido-NAD(+) is bound by residues Lys179 and Asp186. Residues Lys195 and Thr217 each contribute to the ATP site. 266-267 (HK) provides a ligand contact to deamido-NAD(+).

The protein belongs to the NAD synthetase family. In terms of assembly, homodimer.

The enzyme catalyses deamido-NAD(+) + NH4(+) + ATP = AMP + diphosphate + NAD(+) + H(+). The protein operates within cofactor biosynthesis; NAD(+) biosynthesis; NAD(+) from deamido-NAD(+) (ammonia route): step 1/1. Catalyzes the ATP-dependent amidation of deamido-NAD to form NAD. Uses ammonia as a nitrogen source. This is NH(3)-dependent NAD(+) synthetase from Shewanella amazonensis (strain ATCC BAA-1098 / SB2B).